The following is a 244-amino-acid chain: Triosephosphate isomerase (244 aa).

A substrate-binding site is contributed by 9-11 (NWK). Catalysis depends on His-93, which acts as the Electrophile. Glu-161 (proton acceptor) is an active-site residue. Residues Gly-167, Ser-206, and 227–228 (GG) contribute to the substrate site.

It belongs to the triosephosphate isomerase family. In terms of assembly, homodimer.

Its subcellular location is the cytoplasm. The catalysed reaction is D-glyceraldehyde 3-phosphate = dihydroxyacetone phosphate. Its pathway is carbohydrate biosynthesis; gluconeogenesis. It participates in carbohydrate degradation; glycolysis; D-glyceraldehyde 3-phosphate from glycerone phosphate: step 1/1. Involved in the gluconeogenesis. Catalyzes stereospecifically the conversion of dihydroxyacetone phosphate (DHAP) to D-glyceraldehyde-3-phosphate (G3P). The chain is Triosephosphate isomerase from Deinococcus geothermalis (strain DSM 11300 / CIP 105573 / AG-3a).